A 385-amino-acid polypeptide reads, in one-letter code: Serine/threonine-protein kinase SBK1 (385 aa).

Positions 32-297 constitute a Protein kinase domain; the sequence is YEVIRELGKG…VFAHLGHRWM (266 aa). ATP contacts are provided by residues 38-46 and Lys-61; that span reads LGKGTYGKV. The active-site Proton acceptor is the Asp-153. The span at 328-338 shows a compositional bias: polar residues; the sequence is TLSPTANTSNA. The segment at 328 to 374 is disordered; sequence TLSPTANTSNAIEPGSANHFTSMSTNSSVSSTNSYERSARDSPPTSR. The segment covering 348 to 361 has biased composition (low complexity); sequence TSMSTNSSVSSTNS.

This sequence belongs to the protein kinase superfamily. Ser/Thr protein kinase family. Mainly expressed in brain.

The protein resides in the cytoplasm. It carries out the reaction L-seryl-[protein] + ATP = O-phospho-L-seryl-[protein] + ADP + H(+). It catalyses the reaction L-threonyl-[protein] + ATP = O-phospho-L-threonyl-[protein] + ADP + H(+). May be involved in the control of neuronal proliferation or migration in the brain of embryos. The protein is Serine/threonine-protein kinase SBK1 (sbk1) of Danio rerio (Zebrafish).